The chain runs to 264 residues: MKQYLHLMKKVLNEGTEKEDRTGTGTVSIFGHQMRFNLKEGFPLVTTKKCHLRSIIHELLWFLKGDTNIAYLRENQVSIWEEWADKTGSLGPIYGKQWRAWGTPDGHQVDQLSQTLELLKNNPDSRRMIVSAWNVGELDKMALAPCHAFFQFYVVKKTLSCQLYQRSCDVFLGLPFNIASYSLLMHMIAQQCDFFLGDFVWTGGDIHLYSNHLDQAHLQLTREPRSLPHLLINRKPDSLFDYHFEDFSLEKYNPYPAIKAPVAI.

Residue arginine 21 coordinates dUMP. (6R)-5,10-methylene-5,6,7,8-tetrahydrofolate is bound at residue histidine 51. Residue 126–127 (RR) participates in dUMP binding. Cysteine 146 acts as the Nucleophile in catalysis. DUMP-binding positions include 166–169 (RSCD), asparagine 177, and 207–209 (HLY). Position 169 (aspartate 169) interacts with (6R)-5,10-methylene-5,6,7,8-tetrahydrofolate. Alanine 263 serves as a coordination point for (6R)-5,10-methylene-5,6,7,8-tetrahydrofolate.

It belongs to the thymidylate synthase family. Bacterial-type ThyA subfamily. In terms of assembly, homodimer.

The protein localises to the cytoplasm. The enzyme catalyses dUMP + (6R)-5,10-methylene-5,6,7,8-tetrahydrofolate = 7,8-dihydrofolate + dTMP. It participates in pyrimidine metabolism; dTTP biosynthesis. In terms of biological role, catalyzes the reductive methylation of 2'-deoxyuridine-5'-monophosphate (dUMP) to 2'-deoxythymidine-5'-monophosphate (dTMP) while utilizing 5,10-methylenetetrahydrofolate (mTHF) as the methyl donor and reductant in the reaction, yielding dihydrofolate (DHF) as a by-product. This enzymatic reaction provides an intracellular de novo source of dTMP, an essential precursor for DNA biosynthesis. The chain is Thymidylate synthase from Hamiltonella defensa subsp. Acyrthosiphon pisum (strain 5AT).